Consider the following 96-residue polypeptide: Co-chaperonin GroES (96 aa).

It belongs to the GroES chaperonin family. In terms of assembly, heptamer of 7 subunits arranged in a ring. Interacts with the chaperonin GroEL.

It is found in the cytoplasm. In terms of biological role, together with the chaperonin GroEL, plays an essential role in assisting protein folding. The GroEL-GroES system forms a nano-cage that allows encapsulation of the non-native substrate proteins and provides a physical environment optimized to promote and accelerate protein folding. GroES binds to the apical surface of the GroEL ring, thereby capping the opening of the GroEL channel. The chain is Co-chaperonin GroES from Haemophilus influenzae (strain 86-028NP).